Here is a 242-residue protein sequence, read N- to C-terminus: Glutamate transport ATP-binding protein GluA (242 aa).

Residues 2 to 236 (IKMTGVQKFF…PQTDRAKDFL (235 aa)) enclose the ABC transporter domain. 34 to 41 (GPSGSGKS) is an ATP binding site.

It belongs to the ABC transporter superfamily. In terms of assembly, the complex is composed of two ATP-binding proteins (GluA), two transmembrane proteins (GluC and GluD) and a solute-binding protein (GluB).

The protein resides in the cell membrane. The enzyme catalyses a polar amino acid(out) + ATP + H2O = a polar amino acid(in) + ADP + phosphate + H(+). The catalysed reaction is L-glutamate(out) + ATP + H2O = L-glutamate(in) + ADP + phosphate + H(+). In terms of biological role, part of the ABC transporter complex GluABCD involved in glutamate uptake. Probably responsible for energy coupling to the transport system. This Corynebacterium efficiens (strain DSM 44549 / YS-314 / AJ 12310 / JCM 11189 / NBRC 100395) protein is Glutamate transport ATP-binding protein GluA.